Reading from the N-terminus, the 979-residue chain is Collagen alpha-2(I) chain (979 aa).

The segment at 1–979 (SGGFDFSFLP…FGYEGDFYRA (979 aa)) is disordered. Proline 10, proline 13, proline 38, and proline 44 each carry 4-hydroxyproline. The segment covering 24-70 (LGPGPMGLMGPRGPPGASGAPGPQGFQGPAGEPGEPGQTGPAGARGP) has biased composition (low complexity). Lysine 99 carries the 5-hydroxylysine; alternate modification. O-linked (Gal...) hydroxylysine; alternate glycosylation is present at lysine 99. Composition is skewed to low complexity over residues 147–176 (VGAPGPAGARGSDGSVGPVGPAGPIGSAGP), 222–263 (PGAN…AGSK), 272–282 (SAGPQGPPGSS), and 312–331 (RAGVIGPAGARGASGPAGVR). Residues proline 334 and proline 337 each carry the 4-hydroxyproline modification. The span at 363–382 (LPGIDGRPGPIGPAGARGEA) shows a compositional bias: low complexity. Over residues 427–436 (GVQGGKGEQG) the composition is skewed to gly residues. Positions 483 to 500 (PGESGAVGPSGAIGSRGP) are enriched in low complexity. Over residues 517-527 (GAPGGSGGLPG) the composition is skewed to gly residues. Low complexity-rich tracts occupy residues 550-594 (VGTT…PRGS) and 601-621 (VGPAGPNGFAGPAGAAGQPGA). Residues 622 to 631 (KGERGTKGPK) show a composition bias toward basic and acidic residues. Residues 639-649 (PTGPVGSAGPA) show a composition bias toward low complexity. The segment covering 659–668 (GSRGDGGPPG) has biased composition (gly residues). Residues 669 to 679 (ATGFPGAAGRT) are compositionally biased toward low complexity. Residues 710 to 724 (GPVGRGETGAGGPPG) are compositionally biased toward gly residues. Composition is skewed to low complexity over residues 725–759 (FTGEKGPSGEPGTAGPPGTAGPQGLLGAPGILGLP) and 767–777 (LPGVAGAVGEP). The segment covering 778–788 (GPLGIGPPGAR) has biased composition (gly residues). Residues 840–855 (EPGPVGSVGPVGALGP) show a composition bias toward low complexity. Basic and acidic residues predominate over residues 865–876 (RGDKGEPGDKGP). Positions 949 to 961 (SGPPGPPGPPGPP) are enriched in pro residues.

This sequence belongs to the fibrillar collagen family. In terms of assembly, trimers of one alpha 2(I) and two alpha 1(I) chains. Interacts (via C-terminus) with TMEM131 (via PapD-L domain); the interaction is direct and is involved in assembly and TRAPPIII ER-to-Golgi transport complex-dependent secretion of collagen. Post-translationally, prolines at the third position of the tripeptide repeating unit (G-X-Y) are hydroxylated in some or all of the chains. In terms of tissue distribution, expressed in bones.

Its subcellular location is the secreted. It localises to the extracellular space. It is found in the extracellular matrix. In terms of biological role, type I collagen is a member of group I collagen (fibrillar forming collagen). This chain is Collagen alpha-2(I) chain, found in Bradypus variegatus (Brown-throated three-fingered sloth).